Reading from the N-terminus, the 259-residue chain is Adenosylcobinamide-GDP ribazoletransferase (259 aa).

Transmembrane regions (helical) follow at residues 9–29 (NLFF…WIEV), 43–63 (LVGL…LYWV), 64–84 (SPSI…GGFH), 118–138 (ALAL…LALF), 143–163 (VSLA…SFIF), and 190–210 (ILLA…ALVL).

It belongs to the CobS family. Mg(2+) is required as a cofactor.

It is found in the cell inner membrane. The catalysed reaction is alpha-ribazole + adenosylcob(III)inamide-GDP = adenosylcob(III)alamin + GMP + H(+). It catalyses the reaction alpha-ribazole 5'-phosphate + adenosylcob(III)inamide-GDP = adenosylcob(III)alamin 5'-phosphate + GMP + H(+). It participates in cofactor biosynthesis; adenosylcobalamin biosynthesis; adenosylcobalamin from cob(II)yrinate a,c-diamide: step 7/7. Its function is as follows. Joins adenosylcobinamide-GDP and alpha-ribazole to generate adenosylcobalamin (Ado-cobalamin). Also synthesizes adenosylcobalamin 5'-phosphate from adenosylcobinamide-GDP and alpha-ribazole 5'-phosphate. The sequence is that of Adenosylcobinamide-GDP ribazoletransferase from Shewanella pealeana (strain ATCC 700345 / ANG-SQ1).